Consider the following 110-residue polypeptide: Putative anti-sigma factor antagonist TM_1442 (110 aa).

The 107-residue stretch at 4-110 folds into the STAS domain; that stretch reads LKLDIVEQDD…FKITDTVEEA (107 aa). S59 is subject to Phosphoserine.

Belongs to the anti-sigma-factor antagonist family. Post-translationally, phosphorylated on a serine residue.

In terms of biological role, in the phosphorylated form it could act as an anti-anti-sigma factor that counteracts an anti-sigma factor and thus releases a sigma factor from inhibition. The sequence is that of Putative anti-sigma factor antagonist TM_1442 from Thermotoga maritima (strain ATCC 43589 / DSM 3109 / JCM 10099 / NBRC 100826 / MSB8).